The following is a 206-amino-acid chain: FMN-dependent NADH:quinone oxidoreductase 1 (206 aa).

FMN-binding positions include Ser10 and 16 to 18; that span reads SLS.

This sequence belongs to the azoreductase type 1 family. As to quaternary structure, homodimer. The cofactor is FMN.

The enzyme catalyses 2 a quinone + NADH + H(+) = 2 a 1,4-benzosemiquinone + NAD(+). The catalysed reaction is N,N-dimethyl-1,4-phenylenediamine + anthranilate + 2 NAD(+) = 2-(4-dimethylaminophenyl)diazenylbenzoate + 2 NADH + 2 H(+). Quinone reductase that provides resistance to thiol-specific stress caused by electrophilic quinones. Its function is as follows. Also exhibits azoreductase activity. Catalyzes the reductive cleavage of the azo bond in aromatic azo compounds to the corresponding amines. The chain is FMN-dependent NADH:quinone oxidoreductase 1 from Burkholderia lata (strain ATCC 17760 / DSM 23089 / LMG 22485 / NCIMB 9086 / R18194 / 383).